Consider the following 187-residue polypeptide: UPF0340 protein SMU_87 (187 aa).

This sequence belongs to the UPF0340 family.

The polypeptide is UPF0340 protein SMU_87 (Streptococcus mutans serotype c (strain ATCC 700610 / UA159)).